Reading from the N-terminus, the 216-residue chain is Ribosomal RNA large subunit methyltransferase E (216 aa).

S-adenosyl-L-methionine is bound by residues Gly60, Trp62, Asp80, Asp96, and Asp121. Lys161 acts as the Proton acceptor in catalysis.

This sequence belongs to the class I-like SAM-binding methyltransferase superfamily. RNA methyltransferase RlmE family.

It localises to the cytoplasm. It catalyses the reaction uridine(2552) in 23S rRNA + S-adenosyl-L-methionine = 2'-O-methyluridine(2552) in 23S rRNA + S-adenosyl-L-homocysteine + H(+). In terms of biological role, specifically methylates the uridine in position 2552 of 23S rRNA at the 2'-O position of the ribose in the fully assembled 50S ribosomal subunit. In Pseudomonas fluorescens (strain SBW25), this protein is Ribosomal RNA large subunit methyltransferase E.